The chain runs to 577 residues: 9-cis-epoxycarotenoid dioxygenase NCED6, chloroplastic (577 aa).

A disordered region spans residues 1–25 (MQHSLRSDLLPTKTSPRSHLLPQPK). Fe cation contacts are provided by His-276, His-325, His-390, and His-563.

This sequence belongs to the carotenoid oxygenase family. The cofactor is Fe(2+). In terms of tissue distribution, expressed before fertilization in male and female gametophytes, and then immediately after pollination, restricted to seed endosperm.

It localises to the plastid. The protein localises to the chloroplast stroma. The enzyme catalyses a 9-cis-epoxycarotenoid + O2 = a 12'-apo-carotenal + 2-cis,4-trans-xanthoxin. It catalyses the reaction 9-cis-violaxanthin + O2 = (3S,5R,6S)-5,6-epoxy-3-hydroxy-5,6-dihydro-12'-apo-beta-caroten-12'-al + 2-cis,4-trans-xanthoxin. It carries out the reaction 9'-cis-neoxanthin + O2 = (3S,5R,6R)-3,5-dihydroxy-6,7-didehydro-5,6-dihydro-12'-apo-beta-caroten-12'-al + 2-cis,4-trans-xanthoxin. Has a 11,12(11',12') 9-cis epoxycarotenoid cleavage activity. Catalyzes the first step of abscisic-acid biosynthesis from carotenoids. Contributes probably to abscisic acid synthesis for the induction of seed dormancy. This Arabidopsis thaliana (Mouse-ear cress) protein is 9-cis-epoxycarotenoid dioxygenase NCED6, chloroplastic (NCED6).